Reading from the N-terminus, the 137-residue chain is Active regulator of SIRT1 (137 aa).

At Arg-7 the chain carries Citrulline. Over residues Gly-14–Gly-24 the composition is skewed to low complexity. Residues Gly-14–Ser-58 are disordered. At Ser-84 the chain carries Phosphoserine. Residues Arg-96–Thr-120 are disordered.

The protein belongs to the AROS family. Part of the small subunit (SSU) processome, composed of more than 70 proteins and the RNA chaperone small nucleolar RNA (snoRNA) U3. Interacts with RPS19; the interaction is direct and mediates the integration of RPS19 in state post-A1. Interacts with SIRT1. In terms of processing, citrullinated by PADI4.

Its subcellular location is the nucleus. It is found in the nucleolus. Functionally, part of the small subunit (SSU) processome, first precursor of the small eukaryotic ribosomal subunit. During the assembly of the SSU processome in the nucleolus, many ribosome biogenesis factors, an RNA chaperone and ribosomal proteins associate with the nascent pre-rRNA and work in concert to generate RNA folding, modifications, rearrangements and cleavage as well as targeted degradation of pre-ribosomal RNA by the RNA exosome. Acts as a chaperone that specifically mediates the integration of RPS19 in state post-A1. Direct regulator of SIRT1. Enhances SIRT1-mediated deacetylation of p53/TP53, thereby participating in inhibition of p53/TP53-mediated transcriptional activity. The protein is Active regulator of SIRT1 (RPS19BP1) of Bos taurus (Bovine).